The following is a 111-amino-acid chain: Toxin 3FTx-Tel4 (111 aa).

The N-terminal stretch at 1–19 is a signal peptide; it reads MKTLLLALVVVAFMCLGSA. A propeptide spanning residues 20–34 is cleaved from the precursor; it reads DQLGLGSQRIDWEQG. Q35 carries the post-translational modification Pyrrolidone carboxylic acid. 5 disulfides stabilise this stretch: C44/C68, C47/C55, C61/C87, C91/C102, and C103/C108.

The protein belongs to the three-finger toxin family. Ancestral subfamily. Boigatoxin sub-subfamily. As to expression, expressed by the venom gland.

The protein resides in the secreted. Its function is as follows. Potent postsynaptic neurotoxin. Displays readily reversible competitive antagonism at the nicotinic acetylcholine receptor (nAChR). The polypeptide is Toxin 3FTx-Tel4 (Telescopus dhara (Egyptian catsnake)).